A 156-amino-acid chain; its full sequence is Small ribosomal subunit protein uS7 (156 aa).

This sequence belongs to the universal ribosomal protein uS7 family. In terms of assembly, part of the 30S ribosomal subunit. Contacts proteins S9 and S11.

One of the primary rRNA binding proteins, it binds directly to 16S rRNA where it nucleates assembly of the head domain of the 30S subunit. Is located at the subunit interface close to the decoding center, probably blocks exit of the E-site tRNA. In Phytoplasma australiense, this protein is Small ribosomal subunit protein uS7.